The primary structure comprises 464 residues: E3 ubiquitin-protein ligase ITT1 (464 aa).

A TRIAD supradomain region spans residues 176–455 (SNYHCCICME…EAYSGCYGRL (280 aa)). Residues C180, C183, C207, C210, C290, C300, C316, C319, C402, and C405 each coordinate Zn(2+). The RING-type 1 zinc finger occupies 180-236 (CCICMEMEKGVRMIKLPCENANVEHYLCRGCAKSYFTAMIQENRISSVRCPQCEYKE). The segment at 267–338 (DTELCERYEK…HAWHGYNNKC (72 aa)) adopts an IBR-type zinc-finger fold. The segment at 402–431 (CPKCKVVVERSEGCNKMKCEVCGTLFCFIC) adopts an RING-type 2; atypical zinc-finger fold. C415 is an active-site residue. Residues C420, C423, C428, C431, H443, and C451 each coordinate Zn(2+).

Belongs to the RBR family. RNF14 subfamily. As to quaternary structure, interacts with translation release factors eRF1 (SUP45) and eRF3 (SUP35) in vitro.

The enzyme catalyses [E2 ubiquitin-conjugating enzyme]-S-ubiquitinyl-L-cysteine + [acceptor protein]-L-lysine = [E2 ubiquitin-conjugating enzyme]-L-cysteine + [acceptor protein]-N(6)-ubiquitinyl-L-lysine.. It functions in the pathway protein modification; protein ubiquitination. E3 ubiquitin-protein ligase involved in translation quality control. Involved in the rescue of stalled ribosomes by promoting ubiquitination and degradation of proteins on stalled ribosomes. Specifically required to resolve RNA-protein cross-links caused by reactive aldehydes, which trigger translation stress by stalling ribosomes: acts by catalying 'Lys-6'-linked ubiquitination of RNA-protein cross-links, leading to their degradation. Interacts with the translation termination factors eRF1 (SUP45) and eRF3 (SUP35); overexpression decreases the efficiency of translation termination. In Saccharomyces cerevisiae (strain ATCC 204508 / S288c) (Baker's yeast), this protein is E3 ubiquitin-protein ligase ITT1.